A 525-amino-acid chain; its full sequence is Arabinose import ATP-binding protein AraG 2 (525 aa).

Positions 1 to 25 are disordered; that stretch reads MTDTTIRARGAQAAGSPAGAGPLDA. Low complexity predominate over residues 7-25; the sequence is RARGAQAAGSPAGAGPLDA. 2 ABC transporter domains span residues 35–270 and 281–524; these read LELD…MVGR and REPG…LALP. 67 to 74 lines the ATP pocket; the sequence is GENGAGKS.

The protein belongs to the ABC transporter superfamily. Arabinose importer (TC 3.A.1.2.2) family. In terms of assembly, the complex is composed of two ATP-binding proteins (AraG), two transmembrane proteins (AraH) and a solute-binding protein (AraF).

The protein localises to the cell inner membrane. It carries out the reaction L-arabinose(out) + ATP + H2O = L-arabinose(in) + ADP + phosphate + H(+). Functionally, part of the ABC transporter complex AraFGH involved in arabinose import. Responsible for energy coupling to the transport system. This is Arabinose import ATP-binding protein AraG 2 from Burkholderia thailandensis (strain ATCC 700388 / DSM 13276 / CCUG 48851 / CIP 106301 / E264).